The sequence spans 290 residues: uncharacterized protein (290 aa).

Residue K203 is the Schiff-base intermediate with substrate of the active site.

This sequence belongs to the DeoC/FbaB aldolase family.

This is an uncharacterized protein from Pasteurella multocida (strain Pm70).